The sequence spans 435 residues: 3-ketoacyl-CoA thiolase (435 aa).

Cys-98 serves as the catalytic Acyl-thioester intermediate. Residues His-391 and Cys-421 each act as proton acceptor in the active site.

The protein belongs to the thiolase-like superfamily. Thiolase family. As to quaternary structure, heterotetramer of two alpha chains (FadJ) and two beta chains (FadI).

The protein localises to the cytoplasm. The catalysed reaction is an acyl-CoA + acetyl-CoA = a 3-oxoacyl-CoA + CoA. It functions in the pathway lipid metabolism; fatty acid beta-oxidation. Functionally, catalyzes the final step of fatty acid oxidation in which acetyl-CoA is released and the CoA ester of a fatty acid two carbons shorter is formed. The sequence is that of 3-ketoacyl-CoA thiolase from Vibrio cholerae serotype O1 (strain ATCC 39315 / El Tor Inaba N16961).